A 388-amino-acid chain; its full sequence is Succinate--CoA ligase [ADP-forming] subunit beta (388 aa).

The region spanning 9–244 is the ATP-grasp domain; sequence KQLFAEFGLP…PSQEDEREAH (236 aa). ATP-binding positions include Lys46, 53–55, Glu99, Ser102, and Glu107; that span reads GRG. 2 residues coordinate Mg(2+): Asn199 and Asp213. Substrate is bound by residues Asn264 and 321–323; that span reads GIV.

This sequence belongs to the succinate/malate CoA ligase beta subunit family. Heterotetramer of two alpha and two beta subunits. It depends on Mg(2+) as a cofactor.

It catalyses the reaction succinate + ATP + CoA = succinyl-CoA + ADP + phosphate. The catalysed reaction is GTP + succinate + CoA = succinyl-CoA + GDP + phosphate. The protein operates within carbohydrate metabolism; tricarboxylic acid cycle; succinate from succinyl-CoA (ligase route): step 1/1. Succinyl-CoA synthetase functions in the citric acid cycle (TCA), coupling the hydrolysis of succinyl-CoA to the synthesis of either ATP or GTP and thus represents the only step of substrate-level phosphorylation in the TCA. The beta subunit provides nucleotide specificity of the enzyme and binds the substrate succinate, while the binding sites for coenzyme A and phosphate are found in the alpha subunit. The protein is Succinate--CoA ligase [ADP-forming] subunit beta of Vibrio campbellii (strain ATCC BAA-1116).